The following is a 957-amino-acid chain: Plasma membrane ATPase 1 (957 aa).

Residues 1 to 66 (MGEEKPEVLD…EKKDSKLLKF (66 aa)) are Cytoplasmic-facing. Residues 67 to 86 (LGFMWNPLSWVMEAAAIMAI) form a helical membrane-spanning segment. The Extracellular portion of the chain corresponds to 87 to 98 (ALANGGGKPPDW). Residues 99-119 (QDFVGIITLLIINSTISFIEE) traverse the membrane as a helical segment. Residues 120-248 (NNAGNAAAAL…GHFQKVLTAI (129 aa)) lie on the Cytoplasmic side of the membrane. A helical transmembrane segment spans residues 249-269 (GNFCICSIAVGMIIEIIVMYP). Residues 270 to 279 (IQHRAYRPGI) lie on the Extracellular side of the membrane. A helical transmembrane segment spans residues 280-301 (DNLLVLLIGGIPIAMPTVLSVT). At 302 to 648 (MAIGSHRLAQ…TSRAIFQRMK (347 aa)) the chain is on the cytoplasmic side. The 4-aspartylphosphate intermediate role is filled by Asp-334. Mg(2+)-binding residues include Asp-593 and Asp-597. Residues 649-670 (NYTIYAVSITIRIVLGFMLLAL) traverse the membrane as a helical segment. The Extracellular portion of the chain corresponds to 671–675 (IWKFD). Residues 676–698 (FPPFMVLIIAILNDGTIMTISKD) traverse the membrane as a helical segment. The Cytoplasmic segment spans residues 699–714 (RVKPSPLPDSWKLAEI). Residues 715-735 (FTTGIVLGGYLAMMTVIFFWA) form a helical membrane-spanning segment. Over 736 to 760 (AYKTNFFPHVFGVSTLEKTATDDFR) the chain is Extracellular. Residues 761-781 (KLASAIYLQVSIISQALIFVT) form a helical membrane-spanning segment. Residues 782-793 (RSRSWSFVERPG) are Cytoplasmic-facing. Residues 794 to 814 (FLLVIAFVIAQLVATLIAVYA) form a helical membrane-spanning segment. The Extracellular segment spans residues 815–823 (NWSFAAIEG). The chain crosses the membrane as a helical span at residues 824-844 (IGWGWAGVIWIYNLVFYIPLD). The Cytoplasmic portion of the chain corresponds to 845-957 (IIKFFIRYAL…IETIQQAYTV (113 aa)).

It belongs to the cation transport ATPase (P-type) (TC 3.A.3) family. Type IIIA subfamily. As to expression, expressed in roots, stems, leaves from both vegetative and flowering plants, and flowers at early and late stages of development with highest expression levels found in flowers and stem.

Its subcellular location is the cell membrane. The catalysed reaction is ATP + H2O + H(+)(in) = ADP + phosphate + 2 H(+)(out). Its function is as follows. The plasma membrane ATPase of plants and fungi is a hydrogen ion pump. The proton gradient it generates drives the active transport of nutrients by H(+)-symport. The resulting external acidification and/or internal alkinization may mediate growth responses. This Nicotiana plumbaginifolia (Leadwort-leaved tobacco) protein is Plasma membrane ATPase 1 (PMA1).